We begin with the raw amino-acid sequence, 281 residues long: Energy-coupling factor transporter ATP-binding protein EcfA1 (281 aa).

In terms of domain architecture, ABC transporter spans 7–242 (IAAEDITFRY…NQDLIKIGLD (236 aa)). Residue 42 to 49 (GHNGSGKS) coordinates ATP.

Belongs to the ABC transporter superfamily. Energy-coupling factor EcfA family. Forms a stable energy-coupling factor (ECF) transporter complex composed of 2 membrane-embedded substrate-binding proteins (S component), 2 ATP-binding proteins (A component) and 2 transmembrane proteins (T component).

The protein localises to the cell membrane. Its function is as follows. ATP-binding (A) component of a common energy-coupling factor (ECF) ABC-transporter complex. Unlike classic ABC transporters this ECF transporter provides the energy necessary to transport a number of different substrates. This Bacillus licheniformis (strain ATCC 14580 / DSM 13 / JCM 2505 / CCUG 7422 / NBRC 12200 / NCIMB 9375 / NCTC 10341 / NRRL NRS-1264 / Gibson 46) protein is Energy-coupling factor transporter ATP-binding protein EcfA1.